The primary structure comprises 211 residues: Small ribosomal subunit protein eS1 (211 aa).

It belongs to the eukaryotic ribosomal protein eS1 family.

The polypeptide is Small ribosomal subunit protein eS1 (Methanothrix thermoacetophila (strain DSM 6194 / JCM 14653 / NBRC 101360 / PT) (Methanosaeta thermophila)).